Consider the following 164-residue polypeptide: R-phycoerythrin alpha chain (164 aa).

Residues N47, K81, C82, R84, H88, R137, C139, and R142 each contribute to the (2R,3E)-phycoerythrobilin site.

The protein belongs to the phycobiliprotein family. In terms of assembly, heterododecamer of 6 alpha and 6 beta chains. The basic functional unit of phycobiliproteins is a ring-shaped hexamer formed from two back-to-back trimers contacting via the alpha chain subunits. The trimers are composed of alpha/beta subunit heterodimers arranged around a three-fold axis of symmetry. The phycoerythrins also contain a gamma subunit which is located in the center of the hexamer. Post-translationally, contains two covalently linked phycoerythrobilin chromophores.

It is found in the plastid. Its subcellular location is the chloroplast thylakoid membrane. Light-harvesting photosynthetic tetrapyrrole chromophore-protein from the phycobiliprotein complex. This chain is R-phycoerythrin alpha chain (cpeA), found in Griffithsia monilis (Red alga).